A 429-amino-acid polypeptide reads, in one-letter code: Ribosomal RNA small subunit methyltransferase B (429 aa).

S-adenosyl-L-methionine contacts are provided by residues 254-260, Asp-277, Asp-303, and Asp-322; that span reads CAAPGGK. The active-site Nucleophile is Cys-375.

Belongs to the class I-like SAM-binding methyltransferase superfamily. RsmB/NOP family.

It localises to the cytoplasm. The catalysed reaction is cytidine(967) in 16S rRNA + S-adenosyl-L-methionine = 5-methylcytidine(967) in 16S rRNA + S-adenosyl-L-homocysteine + H(+). Functionally, specifically methylates the cytosine at position 967 (m5C967) of 16S rRNA. This chain is Ribosomal RNA small subunit methyltransferase B, found in Yersinia pseudotuberculosis serotype O:1b (strain IP 31758).